Reading from the N-terminus, the 111-residue chain is Large ribosomal subunit protein P2w (111 aa).

The interval 63–111 is disordered; sequence ASVPSGGGVAVSAAPSSGGGGAAAPAEKKEAKKEEKEESDDDMGFSLFE. A compositionally biased stretch (basic and acidic residues) spans 88–98; it reads AEKKEAKKEEK. A Phosphoserine modification is found at S101.

This sequence belongs to the eukaryotic ribosomal protein P1/P2 family. In terms of assembly, P1 and P2 exist as dimers at the large ribosomal subunit.

In terms of biological role, plays an important role in the elongation step of protein synthesis. This Arabidopsis thaliana (Mouse-ear cress) protein is Large ribosomal subunit protein P2w (RPP2D).